The chain runs to 298 residues: MENFQKVEKIGEGTYGVVYKAKNKLTGEVVALKKIRLDTETEGVPSTAIREISLLKELNHPNIVKLLDVIHTENKLYLVFEFLHQDLKKFMDASALTGIPLPLIKSYLFQLLQGLAFCHSHRVLHRDLKPQNLLINADGSIKLADFGLARAFGVPVRTYTHEVVTLWYRAPEILLGCKYYSTAVDIWSLGCIFAEMVTRRALFPGDSEIDQLFRIFRTLGTPDEVVWPGVTSMPDYKPSFPKWARQDFSKVVPPLDEDGRSLLSQMLHYDPNKRISAKAALAHPFFQDVTKPVPHLRL.

Met1 carries the post-translational modification N-acetylmethionine. The 283-residue stretch at 4–286 folds into the Protein kinase domain; that stretch reads FQKVEKIGEG…AKAALAHPFF (283 aa). N6-acetyllysine is present on Lys6. 10–18 is an ATP binding site; the sequence is IGEGTYGVV. Phosphothreonine is present on Thr14. Phosphotyrosine; by WEE1 is present on Tyr15. Tyr19 carries the post-translational modification Phosphotyrosine. ATP contacts are provided by residues Lys33, 81 to 83, and Asp86; that span reads EFL. Residue Asp127 is the Proton acceptor of the active site. Residues 129–132 and Asp145 contribute to the ATP site; that span reads KPQN. Asn132 and Asp145 together coordinate Mg(2+). Residue Thr160 is modified to Phosphothreonine; by CAK and CCRK.

This sequence belongs to the protein kinase superfamily. CMGC Ser/Thr protein kinase family. CDC2/CDKX subfamily. In terms of assembly, found in a complex with CABLES1, CCNA1 and CCNE1. Interacts with CABLES1. Interacts with UHRF2. Part of a complex consisting of UHRF2, CDK2 and CCNE1. Interacts with the Speedy/Ringo proteins SPDYA and SPDYC. Interaction with SPDYA promotes kinase activation via a conformation change that alleviates obstruction of the substrate-binding cleft by the T-loop. Found in a complex with both SPDYA and CDKN1B/KIP1. Binds to RB1 and CDK7. Binding to CDKN1A (p21) leads to CDK2/cyclin E inactivation at the G1-S phase DNA damage checkpoint, thereby arresting cells at the G1-S transition during DNA repair. Associated with PTPN6 and beta-catenin/CTNNB1. Interacts with CACUL1. May interact with CEP63. Interacts with ANKRD17. Interacts with CEBPA (when phosphorylated). Forms a ternary complex with CCNA2 and CDKN1B; CDKN1B inhibits the kinase activity of CDK2 through conformational rearrangements. Interacts with cyclins A, B1, B3, D, or E. Interacts with CDK2AP2. It depends on Mg(2+) as a cofactor. In terms of processing, phosphorylated at Thr-160 by CDK7 in a CAK complex. Phosphorylation at Thr-160 promotes kinase activity, whereas phosphorylation at Tyr-15 by WEE1 reduces slightly kinase activity. Phosphorylated on Thr-14 and Tyr-15 during S and G2 phases before being dephosphorylated by CDC25A. Post-translationally, nitrosylated after treatment with nitric oxide (DETA-NO).

The protein resides in the cytoplasm. It is found in the cytoskeleton. The protein localises to the microtubule organizing center. Its subcellular location is the centrosome. It localises to the nucleus. The protein resides in the cajal body. It is found in the endosome. The catalysed reaction is L-seryl-[protein] + ATP = O-phospho-L-seryl-[protein] + ADP + H(+). It carries out the reaction L-threonyl-[protein] + ATP = O-phospho-L-threonyl-[protein] + ADP + H(+). Phosphorylation at Thr-14 or Tyr-15 inactivates the enzyme, while phosphorylation at Thr-160 activates it. Stimulated by MYC. Inactivated by CDKN1A (p21). Functionally, serine/threonine-protein kinase involved in the control of the cell cycle; essential for meiosis, but dispensable for mitosis. Phosphorylates CABLES1, CTNNB1, CDK2AP2, ERCC6, NBN, USP37, p53/TP53, NPM1, CDK7, RB1, BRCA2, MYC, NPAT, EZH2. Triggers duplication of centrosomes and DNA. Acts at the G1-S transition to promote the E2F transcriptional program and the initiation of DNA synthesis, and modulates G2 progression; controls the timing of entry into mitosis/meiosis by controlling the subsequent activation of cyclin B/CDK1 by phosphorylation, and coordinates the activation of cyclin B/CDK1 at the centrosome and in the nucleus. Crucial role in orchestrating a fine balance between cellular proliferation, cell death, and DNA repair in embryonic stem cells (ESCs). Activity of CDK2 is maximal during S phase and G2; activated by interaction with cyclin E during the early stages of DNA synthesis to permit G1-S transition, and subsequently activated by cyclin A2 (cyclin A1 in germ cells) during the late stages of DNA replication to drive the transition from S phase to mitosis, the G2 phase. EZH2 phosphorylation promotes H3K27me3 maintenance and epigenetic gene silencing. Cyclin E/CDK2 prevents oxidative stress-mediated Ras-induced senescence by phosphorylating MYC. Involved in G1-S phase DNA damage checkpoint that prevents cells with damaged DNA from initiating mitosis; regulates homologous recombination-dependent repair by phosphorylating BRCA2, this phosphorylation is low in S phase when recombination is active, but increases as cells progress towards mitosis. In response to DNA damage, double-strand break repair by homologous recombination a reduction of CDK2-mediated BRCA2 phosphorylation. Involved in regulation of telomere repair by mediating phosphorylation of NBN. Phosphorylation of RB1 disturbs its interaction with E2F1. NPM1 phosphorylation by cyclin E/CDK2 promotes its dissociation from unduplicated centrosomes, thus initiating centrosome duplication. Cyclin E/CDK2-mediated phosphorylation of NPAT at G1-S transition and until prophase stimulates the NPAT-mediated activation of histone gene transcription during S phase. Required for vitamin D-mediated growth inhibition by being itself inactivated. Involved in the nitric oxide- (NO) mediated signaling in a nitrosylation/activation-dependent manner. USP37 is activated by phosphorylation and thus triggers G1-S transition. CTNNB1 phosphorylation regulates insulin internalization. Phosphorylates FOXP3 and negatively regulates its transcriptional activity and protein stability. Phosphorylates ERCC6 which is essential for its chromatin remodeling activity at DNA double-strand breaks. Acts as a regulator of the phosphatidylinositol 3-kinase/protein kinase B signal transduction by mediating phosphorylation of the C-terminus of protein kinase B (PKB/AKT1 and PKB/AKT2), promoting its activation. This is Cyclin-dependent kinase 2 (CDK2) from Bos taurus (Bovine).